Consider the following 429-residue polypeptide: 3-phosphoshikimate 1-carboxyvinyltransferase (429 aa).

The 3-phosphoshikimate site is built by Lys11, Ser12, and Arg16. Residue Lys11 participates in phosphoenolpyruvate binding. Positions 82 and 110 each coordinate phosphoenolpyruvate. The 3-phosphoshikimate site is built by Ser155, Gln157, Asp302, and Lys329. Residue Gln157 participates in phosphoenolpyruvate binding. Asp302 serves as the catalytic Proton acceptor. Phosphoenolpyruvate is bound by residues Arg333 and Arg385.

This sequence belongs to the EPSP synthase family. In terms of assembly, monomer.

The protein resides in the cytoplasm. The catalysed reaction is 3-phosphoshikimate + phosphoenolpyruvate = 5-O-(1-carboxyvinyl)-3-phosphoshikimate + phosphate. The protein operates within metabolic intermediate biosynthesis; chorismate biosynthesis; chorismate from D-erythrose 4-phosphate and phosphoenolpyruvate: step 6/7. Functionally, catalyzes the transfer of the enolpyruvyl moiety of phosphoenolpyruvate (PEP) to the 5-hydroxyl of shikimate-3-phosphate (S3P) to produce enolpyruvyl shikimate-3-phosphate and inorganic phosphate. The protein is 3-phosphoshikimate 1-carboxyvinyltransferase of Helicobacter pylori (strain J99 / ATCC 700824) (Campylobacter pylori J99).